Consider the following 250-residue polypeptide: Triosephosphate isomerase (250 aa).

Position 9 to 11 (9 to 11) interacts with substrate; sequence NWK. His-95 functions as the Electrophile in the catalytic mechanism. Glu-167 functions as the Proton acceptor in the catalytic mechanism. Residues Gly-173, Ser-212, and 233 to 234 each bind substrate; that span reads GG.

The protein belongs to the triosephosphate isomerase family. Homodimer.

It localises to the cytoplasm. It carries out the reaction D-glyceraldehyde 3-phosphate = dihydroxyacetone phosphate. It participates in carbohydrate biosynthesis; gluconeogenesis. The protein operates within carbohydrate degradation; glycolysis; D-glyceraldehyde 3-phosphate from glycerone phosphate: step 1/1. Involved in the gluconeogenesis. Catalyzes stereospecifically the conversion of dihydroxyacetone phosphate (DHAP) to D-glyceraldehyde-3-phosphate (G3P). This chain is Triosephosphate isomerase, found in Psychromonas ingrahamii (strain DSM 17664 / CCUG 51855 / 37).